The chain runs to 398 residues: Succinate--CoA ligase [ADP-forming] subunit beta (398 aa).

The ATP-grasp domain maps to Lys9–Gln250. Residues Lys50, Gly57–Gly59, Glu104, Leu107, and Glu112 contribute to the ATP site. The Mg(2+) site is built by Asn205 and Asp219. Substrate-binding positions include Asn270 and Gly327–Met329.

This sequence belongs to the succinate/malate CoA ligase beta subunit family. As to quaternary structure, heterotetramer of two alpha and two beta subunits. Requires Mg(2+) as cofactor.

The catalysed reaction is succinate + ATP + CoA = succinyl-CoA + ADP + phosphate. It catalyses the reaction GTP + succinate + CoA = succinyl-CoA + GDP + phosphate. It participates in carbohydrate metabolism; tricarboxylic acid cycle; succinate from succinyl-CoA (ligase route): step 1/1. Succinyl-CoA synthetase functions in the citric acid cycle (TCA), coupling the hydrolysis of succinyl-CoA to the synthesis of either ATP or GTP and thus represents the only step of substrate-level phosphorylation in the TCA. The beta subunit provides nucleotide specificity of the enzyme and binds the substrate succinate, while the binding sites for coenzyme A and phosphate are found in the alpha subunit. The chain is Succinate--CoA ligase [ADP-forming] subunit beta from Sorangium cellulosum (strain So ce56) (Polyangium cellulosum (strain So ce56)).